The primary structure comprises 149 residues: Putative oligosaccharyltransferase complex subunit CG9662 (149 aa).

Residues 1–32 (MIETLYNLPFHILVPPNIKVRRFSIPMPSPMA) are Cytoplasmic-facing. Residues 33 to 53 (VFSVILFSYFLVTGGIIYDVI) traverse the membrane as a helical segment. Residues 54–83 (VEPPSLGATVDEHGHSRPVAFMPYRVNGQY) lie on the Extracellular side of the membrane. The helical transmembrane segment at 84-104 (IMEGLASSFLFTVGGLGFIIM) threads the bilayer. Residues 105 to 117 (DQTHTPGKTNLNR) lie on the Cytoplasmic side of the membrane. Residues 118–138 (LLLTAMGFIFILVSFFTTWLF) traverse the membrane as a helical segment. Residues 139 to 149 (MRMKLPSYLQP) lie on the Extracellular side of the membrane.

This sequence belongs to the OSTC family. In terms of assembly, component of the oligosaccharyltransferase (OST) complex.

The protein localises to the membrane. Subunit of the oligosaccharyl transferase (OST) complex that catalyzes the initial transfer of a defined glycan (Glc(3)Man(9)GlcNAc(2) in eukaryotes) from the lipid carrier dolichol-pyrophosphate to an asparagine residue within an Asn-X-Ser/Thr consensus motif in nascent polypeptide chains, the first step in protein N-glycosylation. N-glycosylation occurs cotranslationally and the complex associates with the Sec61 complex at the channel-forming translocon complex that mediates protein translocation across the endoplasmic reticulum (ER). All subunits are required for a maximal enzyme activity. This Drosophila melanogaster (Fruit fly) protein is Putative oligosaccharyltransferase complex subunit CG9662.